Reading from the N-terminus, the 230-residue chain is Cytochrome c oxidase subunit 2 (230 aa).

At 1-29 the chain is on the mitochondrial intermembrane side; it reads NNFFQGYNLLFQHSLFASYMDWFHAFNCS. The helical transmembrane segment at 30–50 threads the bilayer; the sequence is LLLGVLVFVTLLFGYLIFSTF. Topologically, residues 51–63 are mitochondrial matrix; the sequence is YFKSKKIEYQFGE. Residues 64-84 traverse the membrane as a helical segment; the sequence is LLCSIFPTIILLMQMVPSLSL. Over 85–230 the chain is Mitochondrial intermembrane; the sequence is LYYYGLMNLD…FKSWCFGTME (146 aa). Positions 163, 198, 200, 202, 206, and 209 each coordinate Cu cation. Glu-200 provides a ligand contact to Mg(2+).

The protein belongs to the cytochrome c oxidase subunit 2 family. As to quaternary structure, component of the cytochrome c oxidase (complex IV, CIV), a multisubunit enzyme composed of a catalytic core of 3 subunits and several supernumerary subunits. The complex exists as a monomer or a dimer and forms supercomplexes (SCs) in the inner mitochondrial membrane with ubiquinol-cytochrome c oxidoreductase (cytochrome b-c1 complex, complex III, CIII). Requires Cu cation as cofactor.

Its subcellular location is the mitochondrion inner membrane. The catalysed reaction is 4 Fe(II)-[cytochrome c] + O2 + 8 H(+)(in) = 4 Fe(III)-[cytochrome c] + 2 H2O + 4 H(+)(out). Functionally, component of the cytochrome c oxidase, the last enzyme in the mitochondrial electron transport chain which drives oxidative phosphorylation. The respiratory chain contains 3 multisubunit complexes succinate dehydrogenase (complex II, CII), ubiquinol-cytochrome c oxidoreductase (cytochrome b-c1 complex, complex III, CIII) and cytochrome c oxidase (complex IV, CIV), that cooperate to transfer electrons derived from NADH and succinate to molecular oxygen, creating an electrochemical gradient over the inner membrane that drives transmembrane transport and the ATP synthase. Cytochrome c oxidase is the component of the respiratory chain that catalyzes the reduction of oxygen to water. Electrons originating from reduced cytochrome c in the intermembrane space (IMS) are transferred via the dinuclear copper A center (CU(A)) of subunit 2 and heme A of subunit 1 to the active site in subunit 1, a binuclear center (BNC) formed by heme A3 and copper B (CU(B)). The BNC reduces molecular oxygen to 2 water molecules using 4 electrons from cytochrome c in the IMS and 4 protons from the mitochondrial matrix. In Caenorhabditis remanei (Caenorhabditis vulgaris), this protein is Cytochrome c oxidase subunit 2 (cox-2).